The following is a 442-amino-acid chain: Large ribosomal subunit protein mL65 (442 aa).

This sequence belongs to the mitochondrion-specific ribosomal protein mL65 family. As to quaternary structure, component of the mitochondrial ribosome small subunit (28S) which comprises a 12S rRNA and about 30 distinct proteins.

The protein localises to the mitochondrion. This chain is Large ribosomal subunit protein mL65 (Mrps30), found in Mus musculus (Mouse).